A 342-amino-acid polypeptide reads, in one-letter code: NADH-ubiquinone oxidoreductase chain 2 (342 aa).

9 helical membrane-spanning segments follow: residues 25–45, 58–78, 94–114, 146–166, 174–194, 195–215, 238–258, 274–294, and 316–336; these read TPWLGTWMGLEINLLSIIPML, IKYFIIQSMASTMLLISILII, MMIMSSMMMKMGAAPFHFWLP, MSSFLFVVIMMGIIVGAMGGL, ILAYSSISHLGWMISSMTISE, NTWEFYFLIYSTLNVIIIFMF, FMMMTSLLSLGGLPPMLGFLP, LVLLMITFTTITLYYYMRISF, and VVALPILSMISTMGLICTSNF.

The protein belongs to the complex I subunit 2 family.

It localises to the mitochondrion inner membrane. The catalysed reaction is a ubiquinone + NADH + 5 H(+)(in) = a ubiquinol + NAD(+) + 4 H(+)(out). In terms of biological role, core subunit of the mitochondrial membrane respiratory chain NADH dehydrogenase (Complex I) that is believed to belong to the minimal assembly required for catalysis. Complex I functions in the transfer of electrons from NADH to the respiratory chain. The immediate electron acceptor for the enzyme is believed to be ubiquinone. This Locusta migratoria (Migratory locust) protein is NADH-ubiquinone oxidoreductase chain 2 (ND2).